The primary structure comprises 347 residues: GMP reductase (347 aa).

108 to 131 is an NADP(+) binding site; it reads ADFEKTKQILDLNPALNFVCIDVA. K(+) contacts are provided by Gly181 and Gly183. Cys186 serves as the catalytic Thioimidate intermediate. 216–239 lines the NADP(+) pocket; sequence IVSDGGCTTPGDVAKAFGGGADFV.

It belongs to the IMPDH/GMPR family. GuaC type 1 subfamily. As to quaternary structure, homotetramer.

It catalyses the reaction IMP + NH4(+) + NADP(+) = GMP + NADPH + 2 H(+). In terms of biological role, catalyzes the irreversible NADPH-dependent deamination of GMP to IMP. It functions in the conversion of nucleobase, nucleoside and nucleotide derivatives of G to A nucleotides, and in maintaining the intracellular balance of A and G nucleotides. This is GMP reductase from Shigella boydii serotype 4 (strain Sb227).